Consider the following 878-residue polypeptide: Alanine--tRNA ligase (878 aa).

Residues His-570, His-574, Cys-672, and His-676 each contribute to the Zn(2+) site. Positions 844–864 (GGKGGGGRPDMAQAGGPDASA) are disordered. A compositionally biased stretch (low complexity) spans 855-864 (AQAGGPDASA).

It belongs to the class-II aminoacyl-tRNA synthetase family. It depends on Zn(2+) as a cofactor.

Its subcellular location is the cytoplasm. The catalysed reaction is tRNA(Ala) + L-alanine + ATP = L-alanyl-tRNA(Ala) + AMP + diphosphate. Functionally, catalyzes the attachment of alanine to tRNA(Ala) in a two-step reaction: alanine is first activated by ATP to form Ala-AMP and then transferred to the acceptor end of tRNA(Ala). Also edits incorrectly charged Ser-tRNA(Ala) and Gly-tRNA(Ala) via its editing domain. The protein is Alanine--tRNA ligase of Paramagnetospirillum magneticum (strain ATCC 700264 / AMB-1) (Magnetospirillum magneticum).